The chain runs to 488 residues: Bifunctional protein GlmU (488 aa).

Positions 1-237 (MPRTRTPLAA…VEEASGVNDR (237 aa)) are pyrophosphorylase. Residues 13–16 (LAAG), Lys27, Gln82, 87–88 (GT), 110–112 (SGD), Gly149, Glu164, Asn179, and Asn235 contribute to the UDP-N-acetyl-alpha-D-glucosamine site. Mg(2+) is bound at residue Asp112. Mg(2+) is bound at residue Asn235. The interval 238–258 (VELSRANRVMVGRLAEAFMRA) is linker. Positions 259–488 (GVTIEDPARF…KGRPAARRAS (230 aa)) are N-acetyltransferase. UDP-N-acetyl-alpha-D-glucosamine is bound by residues Arg341 and Lys359. Catalysis depends on His371, which acts as the Proton acceptor. The UDP-N-acetyl-alpha-D-glucosamine site is built by Tyr374 and Asn385. Residues Ala388, 394 to 395 (NY), Ser413, Ala431, and Arg448 each bind acetyl-CoA. A disordered region spans residues 459 to 488 (AQRQAEKQMKGTATGPASARKGRPAARRAS). Basic residues predominate over residues 478–488 (RKGRPAARRAS).

It in the N-terminal section; belongs to the N-acetylglucosamine-1-phosphate uridyltransferase family. This sequence in the C-terminal section; belongs to the transferase hexapeptide repeat family. Homotrimer. Mg(2+) is required as a cofactor.

It is found in the cytoplasm. It catalyses the reaction alpha-D-glucosamine 1-phosphate + acetyl-CoA = N-acetyl-alpha-D-glucosamine 1-phosphate + CoA + H(+). The catalysed reaction is N-acetyl-alpha-D-glucosamine 1-phosphate + UTP + H(+) = UDP-N-acetyl-alpha-D-glucosamine + diphosphate. Its pathway is nucleotide-sugar biosynthesis; UDP-N-acetyl-alpha-D-glucosamine biosynthesis; N-acetyl-alpha-D-glucosamine 1-phosphate from alpha-D-glucosamine 6-phosphate (route II): step 2/2. The protein operates within nucleotide-sugar biosynthesis; UDP-N-acetyl-alpha-D-glucosamine biosynthesis; UDP-N-acetyl-alpha-D-glucosamine from N-acetyl-alpha-D-glucosamine 1-phosphate: step 1/1. It functions in the pathway bacterial outer membrane biogenesis; LPS lipid A biosynthesis. Its function is as follows. Catalyzes the last two sequential reactions in the de novo biosynthetic pathway for UDP-N-acetylglucosamine (UDP-GlcNAc). The C-terminal domain catalyzes the transfer of acetyl group from acetyl coenzyme A to glucosamine-1-phosphate (GlcN-1-P) to produce N-acetylglucosamine-1-phosphate (GlcNAc-1-P), which is converted into UDP-GlcNAc by the transfer of uridine 5-monophosphate (from uridine 5-triphosphate), a reaction catalyzed by the N-terminal domain. In Anaeromyxobacter sp. (strain K), this protein is Bifunctional protein GlmU.